Consider the following 317-residue polypeptide: N(5)-(carboxyethyl)ornithine synthase (317 aa).

Pyruvate-binding residues include Arg-15, Lys-71, and His-92. 172–177 is a binding site for NADP(+); the sequence is GSGNVS.

This sequence belongs to the AlaDH/PNT family. CEOS subfamily. Homotetramer.

It catalyses the reaction N(5)-[1(S)-1-carboxyethyl]-L-ornithine + NADP(+) + H2O = L-ornithine + pyruvate + NADPH + H(+). Catalyzes the NADPH-dependent reductive condensation between pyruvic acid and the side chain amino group of L-ornithine to form N(5)-(L-1-carboxyethyl)-L-ornithine. To a lesser extent, can also use L-lysine as substrate (yielding N(6)-(L-1-carboxyethyl)-L-lysine), and the D-isomers of the 2 basic amino acids. Can use alpha-keto acids other than pyruvate, e.g. glyoxylate. In Clostridium botulinum (strain Hall / ATCC 3502 / NCTC 13319 / Type A), this protein is N(5)-(carboxyethyl)ornithine synthase (ceo).